The chain runs to 249 residues: Tumor necrosis factor ligand superfamily member 12 (249 aa).

Residues 1–21 (MAARRSQRRRGRRGEPGTALL) lie on the Cytoplasmic side of the membrane. A helical; Signal-anchor for type II membrane protein transmembrane segment spans residues 22–42 (VPLALGLGLALACLGLLLAVV). Over 43–249 (SLGSRASLSA…LTYFGLFQVH (207 aa)) the chain is Extracellular. The interval 55-85 (PAQEELVAEEDQDPSELNPQTEESQDPAPFL) is disordered. Acidic residues predominate over residues 56-68 (AQEELVAEEDQDP). In terms of domain architecture, THD spans 107–248 (IAAHYEVHPR…FLTYFGLFQV (142 aa)). N-linked (GlcNAc...) asparagine glycosylation is present at N139. C191 and C210 are disulfide-bonded.

It belongs to the tumor necrosis factor family. In terms of assembly, homotrimer. Interacts with the angiogenic factor AGGF1/VG5Q. The soluble form derives from the membrane form by proteolytic processing. Highly expressed in adult heart, pancreas, skeletal muscle, brain, colon, small intestine, lung, ovary, prostate, spleen, lymph node, appendix and peripheral blood lymphocytes. Low expression in kidney, testis, liver, placenta, thymus and bone marrow. Also detected in fetal kidney, liver, lung and brain.

It is found in the cell membrane. Its subcellular location is the secreted. In terms of biological role, binds to FN14 and possibly also to TNRFSF12/APO3. Weak inducer of apoptosis in some cell types. Mediates NF-kappa-B activation. Promotes angiogenesis and the proliferation of endothelial cells. Also involved in induction of inflammatory cytokines. Promotes IL8 secretion. In Homo sapiens (Human), this protein is Tumor necrosis factor ligand superfamily member 12 (TNFSF12).